A 201-amino-acid polypeptide reads, in one-letter code: Dermatopontin (201 aa).

Positions Met1–Gly18 are cleaved as a signal peptide. The residue at position 19 (Gln19) is a Pyrrolidone carboxylic acid. Tyr23 bears the Sulfotyrosine mark. Tandem repeats lie at residues Ser26 to Pro79, Asp70 to Tyr75, Thr80 to Tyr135, and Asp125 to Phe130. The segment at Ser26–Tyr135 is 2 X 53-55 AA tandem repeats. Disulfide bonds link Cys50–Cys77, Cys90–Cys132, Cys106–Cys133, Cys139–Cys196, and Cys143–Cys189. The 3 X 6 AA tandem repeats of D-R-[EQ]-W-[NQK]-[FY] stretch occupies residues Asp70–Phe186. Sulfotyrosine is present on residues Tyr162, Tyr164, Tyr166, and Tyr167. The stretch at Asp181–Phe186 is one 2-3 repeat. Tyr194 carries the sulfotyrosine modification.

Belongs to the dermatopontin family. As to quaternary structure, interacts with TGFB1, DCN and collagen. Post-translationally, sulfated on tyrosine residue(s). In terms of tissue distribution, expressed in skeletal muscle, heart, pancreas, skin and cultured fibroblasts.

Its subcellular location is the secreted. It localises to the extracellular space. The protein localises to the extracellular matrix. Seems to mediate adhesion by cell surface integrin binding. May serve as a communication link between the dermal fibroblast cell surface and its extracellular matrix environment. Enhances TGFB1 activity. Inhibits cell proliferation. Accelerates collagen fibril formation, and stabilizes collagen fibrils against low-temperature dissociation. In Bos taurus (Bovine), this protein is Dermatopontin (DPT).